The primary structure comprises 467 residues: Ankyrin repeat and SOCS box protein 10 (467 aa).

7 ANK repeats span residues 115–144, 147–176, 180–209, 214–243, 247–289, 293–322, and 326–361; these read ELTT…KPDS, GGRT…DPNT, DGKR…QVDG, EEET…CPDV, EGWT…DADA, DKQR…NANA, and GGHT…AVRV. The SOCS box domain maps to 412–467; it reads YSSLFALVRQPRSLQHLCRCALRSHLEGCLPHALPRLPLPPRMLRFLQLDFEDLLY.

The protein belongs to the ankyrin SOCS box (ASB) family.

It is found in the nucleus. It localises to the cytoplasm. The protein operates within protein modification; protein ubiquitination. In terms of biological role, may be a substrate-recognition component of a SCF-like ECS (Elongin-Cullin-SOCS-box protein) E3 ubiquitin-protein ligase complex which mediates the ubiquitination and subsequent proteasomal degradation of target proteins. The protein is Ankyrin repeat and SOCS box protein 10 (Asb10) of Mus musculus (Mouse).